The following is a 619-amino-acid chain: Chaperone protein HscA homolog (619 aa).

Belongs to the heat shock protein 70 family.

Functionally, chaperone involved in the maturation of iron-sulfur cluster-containing proteins. Has a low intrinsic ATPase activity which is markedly stimulated by HscB. This Shewanella amazonensis (strain ATCC BAA-1098 / SB2B) protein is Chaperone protein HscA homolog.